The chain runs to 283 residues: Bifunctional protein FolD (283 aa).

NADP(+)-binding positions include 166-168 (GAS) and I232.

This sequence belongs to the tetrahydrofolate dehydrogenase/cyclohydrolase family. As to quaternary structure, homodimer.

It carries out the reaction (6R)-5,10-methylene-5,6,7,8-tetrahydrofolate + NADP(+) = (6R)-5,10-methenyltetrahydrofolate + NADPH. The catalysed reaction is (6R)-5,10-methenyltetrahydrofolate + H2O = (6R)-10-formyltetrahydrofolate + H(+). It participates in one-carbon metabolism; tetrahydrofolate interconversion. In terms of biological role, catalyzes the oxidation of 5,10-methylenetetrahydrofolate to 5,10-methenyltetrahydrofolate and then the hydrolysis of 5,10-methenyltetrahydrofolate to 10-formyltetrahydrofolate. This is Bifunctional protein FolD from Mannheimia succiniciproducens (strain KCTC 0769BP / MBEL55E).